We begin with the raw amino-acid sequence, 315 residues long: Ribose-phosphate pyrophosphokinase (315 aa).

ATP-binding positions include 37 to 39 (DGE) and 96 to 97 (RQ). Positions 131 and 171 each coordinate Mg(2+). Residue Lys-195 is part of the active site. D-ribose 5-phosphate is bound by residues Arg-197, Asp-221, and 225-229 (DTGGT).

This sequence belongs to the ribose-phosphate pyrophosphokinase family. Class I subfamily. Homohexamer. It depends on Mg(2+) as a cofactor.

Its subcellular location is the cytoplasm. The enzyme catalyses D-ribose 5-phosphate + ATP = 5-phospho-alpha-D-ribose 1-diphosphate + AMP + H(+). The protein operates within metabolic intermediate biosynthesis; 5-phospho-alpha-D-ribose 1-diphosphate biosynthesis; 5-phospho-alpha-D-ribose 1-diphosphate from D-ribose 5-phosphate (route I): step 1/1. Involved in the biosynthesis of the central metabolite phospho-alpha-D-ribosyl-1-pyrophosphate (PRPP) via the transfer of pyrophosphoryl group from ATP to 1-hydroxyl of ribose-5-phosphate (Rib-5-P). In Haemophilus influenzae (strain ATCC 51907 / DSM 11121 / KW20 / Rd), this protein is Ribose-phosphate pyrophosphokinase.